The chain runs to 95 residues: Small ribosomal subunit protein bS6 (95 aa).

Belongs to the bacterial ribosomal protein bS6 family.

Functionally, binds together with bS18 to 16S ribosomal RNA. This Corynebacterium kroppenstedtii (strain DSM 44385 / JCM 11950 / CIP 105744 / CCUG 35717) protein is Small ribosomal subunit protein bS6.